A 364-amino-acid chain; its full sequence is MWNATPSEEPEPNVTLDLDWDASPGNDSLSDELLPLFPAPLLAGVTATCVALFVVGISGNLLTMLVVSRFRELRTTTNLYLSSMAFSDLLIFLCMPLDLVRLWQYRPWNFGDLLCKLFQFVSESCTYATVLTITALSVERYFAICFPLRAKVVVTKGRVKLVILVIWAVAFCSAGPIFVLVGVEHENGTDPRDTNECRATEFAVRSGLLTVMVWVSSVFFFLPVFCLTVLYSLIGRKLWRRRGDAAVGSSLRDQNHKQTVKMLAVVVFAFILCWLPFHVGRYLFSKSFEPGSLEIAQISQYCNLVSFVLFYLSAAINPILYNIMSKKYRVAVFKLLGFESFSQRKLSTLKDESSRAWTKSSINT.

At 1-40 (MWNATPSEEPEPNVTLDLDWDASPGNDSLSDELLPLFPAP) the chain is on the extracellular side. N-linked (GlcNAc...) asparagine glycosylation is found at asparagine 13 and asparagine 26. A helical transmembrane segment spans residues 41 to 66 (LLAGVTATCVALFVVGISGNLLTMLV). At 67–72 (VSRFRE) the chain is on the cytoplasmic side. A helical membrane pass occupies residues 73-96 (LRTTTNLYLSSMAFSDLLIFLCMP). The Extracellular portion of the chain corresponds to 97-117 (LDLVRLWQYRPWNFGDLLCKL). Cysteine 115 and cysteine 197 form a disulfide bridge. The helical transmembrane segment at 118–139 (FQFVSESCTYATVLTITALSVE) threads the bilayer. Over 140–162 (RYFAICFPLRAKVVVTKGRVKLV) the chain is Cytoplasmic. A helical membrane pass occupies residues 163–183 (ILVIWAVAFCSAGPIFVLVGV). Residues 184 to 211 (EHENGTDPRDTNECRATEFAVRSGLLTV) lie on the Extracellular side of the membrane. N-linked (GlcNAc...) asparagine glycosylation is present at asparagine 187. Residues 212 to 235 (MVWVSSVFFFLPVFCLTVLYSLIG) traverse the membrane as a helical segment. The Cytoplasmic segment spans residues 236–263 (RKLWRRRGDAAVGSSLRDQNHKQTVKML). Residues 264-285 (AVVVFAFILCWLPFHVGRYLFS) form a helical membrane-spanning segment. The Extracellular portion of the chain corresponds to 286–302 (KSFEPGSLEIAQISQYC). The chain crosses the membrane as a helical span at residues 303 to 326 (NLVSFVLFYLSAAINPILYNIMSK). Residues 327–364 (KYRVAVFKLLGFESFSQRKLSTLKDESSRAWTKSSINT) lie on the Cytoplasmic side of the membrane.

The protein belongs to the G-protein coupled receptor 1 family.

It localises to the cell membrane. In terms of biological role, receptor for ghrelin, coupled to G-alpha-11 proteins. Stimulates growth hormone secretion. Also binds other growth hormone releasing peptides (GHRP) (e.g. Met-enkephalin and GHRP-6) as well as non-peptide, low molecular weight secretagogues (e.g. L-692,429, MK-0677, adenosine). The polypeptide is Growth hormone secretagogue receptor type 1 (Ghsr) (Mus musculus (Mouse)).